The sequence spans 131 residues: Ribosome-binding factor A (131 aa).

The protein belongs to the RbfA family. In terms of assembly, monomer. Binds 30S ribosomal subunits, but not 50S ribosomal subunits or 70S ribosomes.

The protein localises to the cytoplasm. Functionally, one of several proteins that assist in the late maturation steps of the functional core of the 30S ribosomal subunit. Associates with free 30S ribosomal subunits (but not with 30S subunits that are part of 70S ribosomes or polysomes). Required for efficient processing of 16S rRNA. May interact with the 5'-terminal helix region of 16S rRNA. In Chromohalobacter salexigens (strain ATCC BAA-138 / DSM 3043 / CIP 106854 / NCIMB 13768 / 1H11), this protein is Ribosome-binding factor A.